The primary structure comprises 456 residues: Bifunctional protein GlmU (456 aa).

The pyrophosphorylase stretch occupies residues 1 to 229; it reads MYKCALILAA…FEEILGVNSR (229 aa). UDP-N-acetyl-alpha-D-glucosamine contacts are provided by residues 8 to 11, Lys-22, Gln-73, and 78 to 79; these read LAAG and GT. Asp-103 contacts Mg(2+). The UDP-N-acetyl-alpha-D-glucosamine site is built by Gly-140, Glu-155, Asn-170, and Asn-227. Residue Asn-227 participates in Mg(2+) binding. The segment at 230 to 250 is linker; the sequence is LQLCQVGKVMQKRINEKHMEN. Residues 251–456 form an N-acetyltransferase region; the sequence is GSTLIDPDNT…GWVDKKGLLK (206 aa). The UDP-N-acetyl-alpha-D-glucosamine site is built by Arg-332 and Lys-350. The active-site Proton acceptor is the His-362. Residues Tyr-365 and Asn-376 each coordinate UDP-N-acetyl-alpha-D-glucosamine. Acetyl-CoA is bound by residues 385 to 386, Ala-422, and Arg-439; that span reads NY.

The protein in the N-terminal section; belongs to the N-acetylglucosamine-1-phosphate uridyltransferase family. In the C-terminal section; belongs to the transferase hexapeptide repeat family. As to quaternary structure, homotrimer. Mg(2+) is required as a cofactor.

It localises to the cytoplasm. The catalysed reaction is alpha-D-glucosamine 1-phosphate + acetyl-CoA = N-acetyl-alpha-D-glucosamine 1-phosphate + CoA + H(+). The enzyme catalyses N-acetyl-alpha-D-glucosamine 1-phosphate + UTP + H(+) = UDP-N-acetyl-alpha-D-glucosamine + diphosphate. Its pathway is nucleotide-sugar biosynthesis; UDP-N-acetyl-alpha-D-glucosamine biosynthesis; N-acetyl-alpha-D-glucosamine 1-phosphate from alpha-D-glucosamine 6-phosphate (route II): step 2/2. It functions in the pathway nucleotide-sugar biosynthesis; UDP-N-acetyl-alpha-D-glucosamine biosynthesis; UDP-N-acetyl-alpha-D-glucosamine from N-acetyl-alpha-D-glucosamine 1-phosphate: step 1/1. The protein operates within bacterial outer membrane biogenesis; LPS lipid A biosynthesis. Functionally, catalyzes the last two sequential reactions in the de novo biosynthetic pathway for UDP-N-acetylglucosamine (UDP-GlcNAc). The C-terminal domain catalyzes the transfer of acetyl group from acetyl coenzyme A to glucosamine-1-phosphate (GlcN-1-P) to produce N-acetylglucosamine-1-phosphate (GlcNAc-1-P), which is converted into UDP-GlcNAc by the transfer of uridine 5-monophosphate (from uridine 5-triphosphate), a reaction catalyzed by the N-terminal domain. The chain is Bifunctional protein GlmU from Clostridium acetobutylicum (strain ATCC 824 / DSM 792 / JCM 1419 / IAM 19013 / LMG 5710 / NBRC 13948 / NRRL B-527 / VKM B-1787 / 2291 / W).